A 559-amino-acid polypeptide reads, in one-letter code: Potassium-transporting ATPase potassium-binding subunit (559 aa).

Transmembrane regions (helical) follow at residues 5–25, 27–47, 63–83, 132–152, 170–190, 253–273, 283–303, 327–347, 356–376, 379–399, 416–436, 484–504, and 524–544; these read GFLLIASFLLILLVLAKPLGS, LARLIAAVPLPGVAGVERILW, LLALLTLNLLGLGILFCLLFW, GLTVQNFLSAATGIAVVFALI, LVRITLWILFPVALIIALFFI, LAQMLAIFLIPAALCFAFGEA, LLWAMSFIFVVCVAVVMWAEV, FGVLASSLFAVVTTAASCGAV, ALGGMVPMWLMQIGEVVFGGV, GLYGMLLFVLLAVFIAGLMIG, MTALAILVTPMLVLLGSALAM, LLAFCMFVGRFGVIIPVMAIA, and GALFIGLLIGTVLLVGALTFI.

This sequence belongs to the KdpA family. In terms of assembly, the system is composed of three essential subunits: KdpA, KdpB and KdpC.

It localises to the cell inner membrane. Part of the high-affinity ATP-driven potassium transport (or Kdp) system, which catalyzes the hydrolysis of ATP coupled with the electrogenic transport of potassium into the cytoplasm. This subunit binds the periplasmic potassium ions and delivers the ions to the membrane domain of KdpB through an intramembrane tunnel. The sequence is that of Potassium-transporting ATPase potassium-binding subunit from Salmonella enteritidis PT4 (strain P125109).